Reading from the N-terminus, the 1392-residue chain is MAGFKPTPAQSKAINDRGENILVSASAGSGKTAVLVNRTIELIKEGQSIDRMLLVTFTDAAAKNMRDKIRAALQKIVQDSANPKDLRDRMSNQINRLAAADISTIHAFCLKLIKRYYYLIDLDPQFRLLTDETERLLLQEDVWHEVSEELYRNAEEKVSGKASFSELVLNFSSDRDDQGLDDLILRLYEIANAQPDPEKWLQKLPDNYDLGSGSLLESNFYQQQLKPLVIEKLNQFIQDYRELVTRASDNGLDQAAEVIKSDEELMHQLLSSLGGITVSDVCQMMAQQKFGSFRGRPAADDPRIDVFKDIQKQRNQLKKQWEQMVSTYLGKQEAQEPIAKEELLTELTTFSDQFTDLLSKATESQLDAKTVDSLQKDQQMMQELLDLLQPPTWNTIRDLFANAKFARMGGKPKDDELAEEVYKSLGSARTGIKKQFDQLVDRFFNYREDQFRLISTHAQELLRELSAVTINFRRRYQQTKLNRHVLEFSDLEHYAYAILTPPDDQPNWQTLVKDLQNHYQEIMIDEYQDTNRLQESILMKLTSPERKNLFMVGDVKQSIYRFREADPTLFLGKYQNYRQGSDGEAIVLGENFRSMTNVTSFTNILFEQLMDREVGEIDYDEDAHLKYAATYYEENQDNKVHPTEVLLYDANALDPEKEDVEHEDDKLAGEFRMIGMRIKQMVENQELIFHPEDGQMHPIQYGDIVLLERTKAINNSLMEEFNKLNIPLTVHDVESYFQATEVRVMMSLLKIIDNPQQDIPLVAVLRSPIVGLTNQELAFIRLQNRSVDYYAALQTFMSNYQRKALRHQSLLTSEQVNALYEKADHFLGLLRVFRQTAQQQTLVDLIWQIYDQTGYLDYVGAMPGGHQRQANLHALYQRAHSYEQSSFKGLYQFIRFIEKMQEHDKDLGVAPTQLTANTVNVMTIHGSKGLQFPVVFLIDATHGFNKGAARENAVVDAVAGVGIRYMDDQRVIYDTPQRQAVIEEIQRGERAEDLRVLYVALTRAEQRLVITGSFNEEMRTQSLAGSWQRWQKAYQSKNLLIGPQPRITANSFMDWVGLALARYPEFNAQQLSRGNVTLEESTLADTKVTGLAADPHFTAKTYTALDVSDGLAKIGQNASANVTEKNNTVATDASEQKIEQILRYRYPHLVATKTTAYQSVTDVKRVFEDPDTRDMARWDYDQQQKVKTQGIYLNNNFDVPAFIQQTTHEPVATEIGTATHLVFQKLPLDEGLINVEFVDQEIQKLVGEKLINPVVAARINREGIVAFYQTAVGQKILKHPADYHREVPFSMIMNGHELFKGVNVSDDERILIHGIIDGYLRTDEGIILVDYKNDHLNKDYRDFDLARIKDRYRGQLELYKEALNLMEGIPVVQMGLYLLELGEFVLFTKEGD.

The UvrD-like helicase ATP-binding domain occupies 4-595 (FKPTPAQSKA…IVLGENFRSM (592 aa)). Position 25-32 (25-32 (ASAGSGKT)) interacts with ATP. The UvrD-like helicase C-terminal domain maps to 623 to 929 (AHLKYAATYY…NVMTIHGSKG (307 aa)).

This sequence belongs to the helicase family. AddA subfamily. Heterodimer of AddA and AddB/RexB. The cofactor is Mg(2+).

It carries out the reaction Couples ATP hydrolysis with the unwinding of duplex DNA by translocating in the 3'-5' direction.. It catalyses the reaction ATP + H2O = ADP + phosphate + H(+). Functionally, the heterodimer acts as both an ATP-dependent DNA helicase and an ATP-dependent, dual-direction single-stranded exonuclease. Recognizes the chi site generating a DNA molecule suitable for the initiation of homologous recombination. The AddA nuclease domain is required for chi fragment generation; this subunit has the helicase and 3' -&gt; 5' nuclease activities. This chain is ATP-dependent helicase/nuclease subunit A, found in Limosilactobacillus reuteri subsp. reuteri (strain JCM 1112) (Lactobacillus reuteri).